Consider the following 356-residue polypeptide: Nicotinate-nucleotide--dimethylbenzimidazole phosphoribosyltransferase (356 aa).

The active-site Proton acceptor is the Glu317.

Belongs to the CobT family. Homodimer.

It catalyses the reaction 5,6-dimethylbenzimidazole + nicotinate beta-D-ribonucleotide = alpha-ribazole 5'-phosphate + nicotinate + H(+). Its pathway is nucleoside biosynthesis; alpha-ribazole biosynthesis; alpha-ribazole from 5,6-dimethylbenzimidazole: step 1/2. In terms of biological role, catalyzes the synthesis of alpha-ribazole-5'-phosphate from nicotinate mononucleotide (NAMN) and 5,6-dimethylbenzimidazole (DMB). In Salmonella schwarzengrund (strain CVM19633), this protein is Nicotinate-nucleotide--dimethylbenzimidazole phosphoribosyltransferase.